Here is a 341-residue protein sequence, read N- to C-terminus: L-threonine 3-dehydrogenase (341 aa).

Residue C38 coordinates Zn(2+). Active-site charge relay system residues include T40 and H43. Zn(2+)-binding residues include H63, E64, C93, C96, C99, and C107. Residues I175, D195, R200, 262 to 264 (LGI), and 286 to 287 (IY) each bind NAD(+).

The protein belongs to the zinc-containing alcohol dehydrogenase family. Homotetramer. Zn(2+) serves as cofactor.

It localises to the cytoplasm. The enzyme catalyses L-threonine + NAD(+) = (2S)-2-amino-3-oxobutanoate + NADH + H(+). Its pathway is amino-acid degradation; L-threonine degradation via oxydo-reductase pathway; glycine from L-threonine: step 1/2. Functionally, catalyzes the NAD(+)-dependent oxidation of L-threonine to 2-amino-3-ketobutyrate. The chain is L-threonine 3-dehydrogenase from Shewanella halifaxensis (strain HAW-EB4).